The sequence spans 151 residues: Guanylate kinase homolog (151 aa).

The Guanylate kinase-like domain occupies Met-1–Gln-141.

This sequence belongs to the guanylate kinase family.

This Bos taurus (Bovine) protein is Guanylate kinase homolog.